Consider the following 246-residue polypeptide: 1-(5-phosphoribosyl)-5-[(5-phosphoribosylamino)methylideneamino] imidazole-4-carboxamide isomerase (246 aa).

Catalysis depends on Asp8, which acts as the Proton acceptor. Residue Asp131 is the Proton donor of the active site.

It belongs to the HisA/HisF family.

The protein localises to the cytoplasm. The catalysed reaction is 1-(5-phospho-beta-D-ribosyl)-5-[(5-phospho-beta-D-ribosylamino)methylideneamino]imidazole-4-carboxamide = 5-[(5-phospho-1-deoxy-D-ribulos-1-ylimino)methylamino]-1-(5-phospho-beta-D-ribosyl)imidazole-4-carboxamide. It participates in amino-acid biosynthesis; L-histidine biosynthesis; L-histidine from 5-phospho-alpha-D-ribose 1-diphosphate: step 4/9. The polypeptide is 1-(5-phosphoribosyl)-5-[(5-phosphoribosylamino)methylideneamino] imidazole-4-carboxamide isomerase (Albidiferax ferrireducens (strain ATCC BAA-621 / DSM 15236 / T118) (Rhodoferax ferrireducens)).